A 489-amino-acid polypeptide reads, in one-letter code: Lysine-specific permease LysP (489 aa).

Residues 2–22 (VSETKTTEAPGLRRELKARHL) are Cytoplasmic-facing. The helical transmembrane segment at 23-43 (TMIAIGGSIGTGLFVASGATI) threads the bilayer. Over 44-45 (SQ) the chain is Periplasmic. Residues 46–66 (AGPGGALLSYMLIGLMVYFLM) traverse the membrane as a helical segment. Residues 67–105 (TSLGELAAYMPVSGSFATYGQNYVEEGFGFALGWNYWYN) are Cytoplasmic-facing. Residues 106-126 (WAVTIAVDLVAAQLVMSWWFP) traverse the membrane as a helical segment. At 127 to 128 (DT) the chain is on the periplasmic side. Residues 129–149 (PGWIWSALFLGVIFLLNYISV) traverse the membrane as a helical segment. At 150-161 (RGFGEAEYWFSL) the chain is on the cytoplasmic side. A helical transmembrane segment spans residues 162–182 (IKVTTVIVFIIVGVLMIIGIF). Residues 183–197 (KGAQPAGWSNWTIGE) are Periplasmic-facing. The chain crosses the membrane as a helical span at residues 198-218 (APFAGGFAAMIGVAMIVGFSF). The Cytoplasmic segment spans residues 219–244 (QGTELIGIAAGESEDPAKNIPRAVRQ). Residues 245 to 265 (VFWRILLFYVFAILIISLIIP) form a helical membrane-spanning segment. Residues 266-290 (YTDPSLLRNDVKDISVSPFTLVFQH) are Periplasmic-facing. The helical transmembrane segment at 291–311 (AGLLSAAAVMNAVILTAVLSA) threads the bilayer. Residues 312–346 (GNSGMYASTRMLYTLACDGKAPRIFAKLSRGGVPR) lie on the Cytoplasmic side of the membrane. A helical transmembrane segment spans residues 347–367 (NALYATTVIAGLCFLTSMFGN). At 368–370 (QTV) the chain is on the periplasmic side. A helical transmembrane segment spans residues 371-391 (YLWLLNTSGMTGFIAWLGIAI). Topologically, residues 392 to 413 (SHYRFRRGYVLQGHDINDLPYR) are cytoplasmic. The helical transmembrane segment at 414–434 (SGFFPLGPIFAFILCLIITLG) threads the bilayer. Residues 435–446 (QNYEAFLKDTID) lie on the Periplasmic side of the membrane. Residues 447-467 (WGGVAATYIGIPLFLIIWFGY) form a helical membrane-spanning segment. Over 468–489 (KLIKGTHFVRYSEMKFPQNDKK) the chain is Cytoplasmic.

It belongs to the amino acid-polyamine-organocation (APC) superfamily. Amino acid transporter (AAT) (TC 2.A.3.1) family. Interacts strongly with the transcriptional activator CadC in the absence of lysine or at low lysine concentrations. Interaction is markedly attenuated under increasing lysine levels. Concomitant pH-dependent protonation of periplasmic amino acids in both proteins dissolves their electrostatic connections resulting in further destabilization of the CadC/LysP interaction. Low pH promotes oligomerization of LysP.

It localises to the cell inner membrane. It carries out the reaction L-lysine(out) + H(+)(out) = L-lysine(in) + H(+)(in). In terms of biological role, permease involved in lysine uptake. In addition, functions as a lysine sensor that mediates the lysine-dependent regulation of the transcriptional activator CadC. In the absence of lysine, or at low lysine concentrations, LysP inhibits CadC by an interaction with the transmembrane domain of CadC. In the presence of lysine, LysP loses its ability to interact with and inhibit CadC, and acts as a lysine permease. The chain is Lysine-specific permease LysP from Escherichia coli (strain K12).